The chain runs to 346 residues: N-acetyl-gamma-glutamyl-phosphate reductase (346 aa).

Residue Cys-149 is part of the active site.

This sequence belongs to the NAGSA dehydrogenase family. Type 1 subfamily.

It localises to the cytoplasm. It carries out the reaction N-acetyl-L-glutamate 5-semialdehyde + phosphate + NADP(+) = N-acetyl-L-glutamyl 5-phosphate + NADPH + H(+). It participates in amino-acid biosynthesis; L-arginine biosynthesis; N(2)-acetyl-L-ornithine from L-glutamate: step 3/4. Catalyzes the NADPH-dependent reduction of N-acetyl-5-glutamyl phosphate to yield N-acetyl-L-glutamate 5-semialdehyde. This chain is N-acetyl-gamma-glutamyl-phosphate reductase, found in Geotalea daltonii (strain DSM 22248 / JCM 15807 / FRC-32) (Geobacter daltonii).